The sequence spans 74 residues: MKVNVLLAVFLVVMVVTDHCHALFGLIPSMMGGLVSAFKGRRKLQMEARFQPQNKNYRKRELDLENLFTHMPDY.

A signal peptide spans 1 to 22; that stretch reads MKVNVLLAVFLVVMVVTDHCHA. K39 is modified (lysine amide). A propeptide spanning residues 44 to 74 is cleaved from the precursor; that stretch reads LQMEARFQPQNKNYRKRELDLENLFTHMPDY.

The protein belongs to the non-disulfide-bridged peptide (NDBP) superfamily. Short antimicrobial peptide (group 4) family. Expressed by the venom gland.

The protein resides in the secreted. It is found in the target cell membrane. In terms of biological role, cationic host defense peptide that have antibacterial activity by breaking membranes. Is more effective on Gram-positive than on Gram-negative bacteria. The protein is Antimicrobial peptide 36.4 of Lychas mucronatus (Chinese swimming scorpion).